A 561-amino-acid polypeptide reads, in one-letter code: Dihydroxy-acid dehydratase (561 aa).

D78 contacts Mg(2+). Residue C119 participates in [2Fe-2S] cluster binding. Mg(2+) is bound by residues D120 and K121. N6-carboxylysine is present on K121. C192 is a binding site for [2Fe-2S] cluster. Position 448 (E448) interacts with Mg(2+). S474 functions as the Proton acceptor in the catalytic mechanism.

The protein belongs to the IlvD/Edd family. As to quaternary structure, homodimer. [2Fe-2S] cluster serves as cofactor. The cofactor is Mg(2+).

The catalysed reaction is (2R)-2,3-dihydroxy-3-methylbutanoate = 3-methyl-2-oxobutanoate + H2O. The enzyme catalyses (2R,3R)-2,3-dihydroxy-3-methylpentanoate = (S)-3-methyl-2-oxopentanoate + H2O. It participates in amino-acid biosynthesis; L-isoleucine biosynthesis; L-isoleucine from 2-oxobutanoate: step 3/4. Its pathway is amino-acid biosynthesis; L-valine biosynthesis; L-valine from pyruvate: step 3/4. In terms of biological role, functions in the biosynthesis of branched-chain amino acids. Catalyzes the dehydration of (2R,3R)-2,3-dihydroxy-3-methylpentanoate (2,3-dihydroxy-3-methylvalerate) into 2-oxo-3-methylpentanoate (2-oxo-3-methylvalerate) and of (2R)-2,3-dihydroxy-3-methylbutanoate (2,3-dihydroxyisovalerate) into 2-oxo-3-methylbutanoate (2-oxoisovalerate), the penultimate precursor to L-isoleucine and L-valine, respectively. In Sulfurimonas denitrificans (strain ATCC 33889 / DSM 1251) (Thiomicrospira denitrificans (strain ATCC 33889 / DSM 1251)), this protein is Dihydroxy-acid dehydratase.